We begin with the raw amino-acid sequence, 1071 residues long: Carbamoyl phosphate synthase large chain (1071 aa).

Positions 1–403 (MPKRTDLKSI…SFQKALRGLE (403 aa)) are carboxyphosphate synthetic domain. 12 residues coordinate ATP: R129, R169, G175, G176, Q208, V210, E215, G241, V242, H243, Q285, and E299. Positions 133-328 (KEAMEKIGLS…IAKVAAKLAV (196 aa)) constitute an ATP-grasp 1 domain. Mg(2+) contacts are provided by Q285, E299, and N301. Positions 285, 299, and 301 each coordinate Mn(2+). Residues 404-548 (TGLCGFNPRS…YSTYEEECEA (145 aa)) are oligomerization domain. Residues 549 to 930 (RPSDRKKVMI…AYYKAQLGAG (382 aa)) form a carbamoyl phosphate synthetic domain region. Residues 673–864 (QKVLNDLGLR…LAKVGARCMA (192 aa)) enclose the ATP-grasp 2 domain. Positions 709, 748, 750, 755, 780, 781, 782, 783, 823, and 835 each coordinate ATP. Mg(2+) contacts are provided by Q823, E835, and N837. Q823, E835, and N837 together coordinate Mn(2+). The 141-residue stretch at 931-1071 (ERLNPTGKIF…ELHGRLKNRS (141 aa)) folds into the MGS-like domain. The tract at residues 931–1071 (ERLNPTGKIF…ELHGRLKNRS (141 aa)) is allosteric domain.

It belongs to the CarB family. Composed of two chains; the small (or glutamine) chain promotes the hydrolysis of glutamine to ammonia, which is used by the large (or ammonia) chain to synthesize carbamoyl phosphate. Tetramer of heterodimers (alpha,beta)4. Requires Mg(2+) as cofactor. It depends on Mn(2+) as a cofactor.

It carries out the reaction hydrogencarbonate + L-glutamine + 2 ATP + H2O = carbamoyl phosphate + L-glutamate + 2 ADP + phosphate + 2 H(+). It catalyses the reaction hydrogencarbonate + NH4(+) + 2 ATP = carbamoyl phosphate + 2 ADP + phosphate + 2 H(+). Its pathway is amino-acid biosynthesis; L-arginine biosynthesis; carbamoyl phosphate from bicarbonate: step 1/1. It functions in the pathway pyrimidine metabolism; UMP biosynthesis via de novo pathway; (S)-dihydroorotate from bicarbonate: step 1/3. Its function is as follows. Large subunit of the glutamine-dependent carbamoyl phosphate synthetase (CPSase). CPSase catalyzes the formation of carbamoyl phosphate from the ammonia moiety of glutamine, carbonate, and phosphate donated by ATP, constituting the first step of 2 biosynthetic pathways, one leading to arginine and/or urea and the other to pyrimidine nucleotides. The large subunit (synthetase) binds the substrates ammonia (free or transferred from glutamine from the small subunit), hydrogencarbonate and ATP and carries out an ATP-coupled ligase reaction, activating hydrogencarbonate by forming carboxy phosphate which reacts with ammonia to form carbamoyl phosphate. The chain is Carbamoyl phosphate synthase large chain from Neisseria meningitidis serogroup A / serotype 4A (strain DSM 15465 / Z2491).